The primary structure comprises 29 residues: Glucagon (29 aa).

This sequence belongs to the glucagon family.

It localises to the secreted. Functionally, glucagon plays a key role in glucose metabolism and homeostasis. Regulates blood glucose by increasing gluconeogenesis and decreasing glycolysis. The sequence is that of Glucagon (GCG) from Meleagris gallopavo (Wild turkey).